The following is a 131-amino-acid chain: Acidic leucine-rich nuclear phosphoprotein 32 family member D (131 aa).

LRR repeat units lie at residues 18 to 38 (DVKELFLDNSQSNEGKLEGLT), 43 to 64 (ELELLNTINIGLTSIANLPKLN), 65 to 87 (KLKKLELSSNRASVGLEVLAEKC), 89 to 110 (NLIHLNLSGNKIKDLSTIEPLK), and 114 to 131 (NLESLDLFTCEVTNLNNY).

The protein belongs to the ANP32 family.

This chain is Acidic leucine-rich nuclear phosphoprotein 32 family member D (ANP32D), found in Homo sapiens (Human).